The following is a 607-amino-acid chain: MTQTFDPSAFLATCSGRPGVYRMFDADATLLYVGKAKNLKKRLASYFRKTGHAPKTGALVARIAQIETTITNNETEALLLEQTLIKEWRPPYNILLRDDKSYPYVFLSDGTYPRLSIHRGAKKAKGRYFGPYPSAGAIRESLSLLQKTFQVRQCEDSFFKNRNRPCLQYQIKRCKGPCVGLVEPEVYAEDVRHSVMFLEGRSNALSDELNASMEKAAMALDFERAAELRDQVALLRRVQDQQSMDGGTGDVDVVAAFVNPGGACVHLISVRGGRVLGSKNFFPQVGIEEEVGEVMSAFLAQYFLGGVDRELPSEVIVNVVNEDFPALIDAIEESRGREMTISHRVRGTRARWQQLAVTNAEQALAARLANRQHVASRFEALAVVLNLDEPPMRLECYDISHSSGEATVASCVVFGPEGPIKSDYRRFNIEGVTAGDDYAAMHQALTRRYSRIKAGEGKLPDVLLVDGGKGQMSMARDVLNELQVPDLILLGVAKGTTRKAGFETLYLNDAAHEFTLPGDSPALHLIQQIRDEAHRFAITGHRARRGKTRRTSTLEGIAGVGPTRRRDLLKHFGGLQELSRASIDEIAKAPGISKKLAESIYANLHSE.

The 79-residue stretch at 16 to 94 folds into the GIY-YIG domain; that stretch reads GRPGVYRMFD…IKEWRPPYNI (79 aa). A UVR domain is found at 203–238; sequence NALSDELNASMEKAAMALDFERAAELRDQVALLRRV.

The protein belongs to the UvrC family. As to quaternary structure, interacts with UvrB in an incision complex.

It localises to the cytoplasm. The UvrABC repair system catalyzes the recognition and processing of DNA lesions. UvrC both incises the 5' and 3' sides of the lesion. The N-terminal half is responsible for the 3' incision and the C-terminal half is responsible for the 5' incision. The polypeptide is UvrABC system protein C (Pseudomonas syringae pv. tomato (strain ATCC BAA-871 / DC3000)).